Reading from the N-terminus, the 131-residue chain is Squamosa promoter-binding-like protein 3 (131 aa).

A compositionally biased stretch (basic and acidic residues) spans 1 to 17 (MSMRRSKAEGKRSLREL). Residues 1-54 (MSMRRSKAEGKRSLRELSEEEEEEEETEDEDTFEEEEALEKKQKGKATSSSGVC) form a disordered region. Acidic residues predominate over residues 18–38 (SEEEEEEEETEDEDTFEEEEA). Positions 45-129 (GKATSSSGVC…GHNERRRKST (85 aa)) are sufficient and necessary for DNA binding. The segment at 51–128 (SGVCQVESCT…AGHNERRRKS (78 aa)) adopts an SBP-type zinc-finger fold. The Zn(2+) site is built by cysteine 54, cysteine 59, cysteine 76, histidine 79, cysteine 95, cysteine 98, histidine 102, and cysteine 114. The Bipartite nuclear localization signal motif lies at 111–127 (KRSCRRRLAGHNERRRK).

Requires Zn(2+) as cofactor. Expressed in vegetative and inflorescence apical meristems, floral meristems, leaf and flower organ primordia, inflorescence stem tissue and to lower extent in roots.

Its subcellular location is the nucleus. The protein resides in the cytoplasm. Its function is as follows. Trans-acting factor that binds specifically to the consensus nucleotide sequence 5'-TNCGTACAA-3' of AP1 promoter. Binds specifically to the 5'-GTAC-3' core sequence. Promotes both vegetative phase change and flowering. Regulates phase-specific patterns of leaf epidermal differentiation and flowering time, but does not seem to affect leaf shape. The chain is Squamosa promoter-binding-like protein 3 (SPL3) from Arabidopsis thaliana (Mouse-ear cress).